The sequence spans 249 residues: 5'-nucleotidase SurE (249 aa).

Positions 8, 9, 39, and 91 each coordinate a divalent metal cation.

This sequence belongs to the SurE nucleotidase family. The cofactor is a divalent metal cation.

The protein localises to the cytoplasm. The enzyme catalyses a ribonucleoside 5'-phosphate + H2O = a ribonucleoside + phosphate. Functionally, nucleotidase that shows phosphatase activity on nucleoside 5'-monophosphates. This is 5'-nucleotidase SurE from Vesicomyosocius okutanii subsp. Calyptogena okutanii (strain HA).